A 174-amino-acid chain; its full sequence is MQLAQCETTSQFSAPVIREDYRDAMARLAAAVNIITTDGPSGRAGFTATAVCSVTDEPPTLLVCLNRSASAHPIVTANGQLCVNTLAGAQRDLSNLFGGKTPMAERFAAAQWSTGVTGSPLLDGATVSFDCRISHSASVGTHDILYCEVLAVYRRDSSDALVYFGRNYHGLSSS.

This sequence belongs to the non-flavoprotein flavin reductase family. RutF subfamily.

It carries out the reaction FMNH2 + NAD(+) = FMN + NADH + 2 H(+). In terms of biological role, catalyzes the reduction of FMN to FMNH2 which is used to reduce pyrimidine by RutA via the Rut pathway. The sequence is that of FMN reductase (NADH) RutF from Stutzerimonas stutzeri (strain A1501) (Pseudomonas stutzeri).